We begin with the raw amino-acid sequence, 132 residues long: Large ribosomal subunit protein bL17 (132 aa).

This sequence belongs to the bacterial ribosomal protein bL17 family. Part of the 50S ribosomal subunit. Contacts protein L32.

This chain is Large ribosomal subunit protein bL17, found in Anaplasma phagocytophilum (strain HZ).